The primary structure comprises 392 residues: MTKKLFMFEKPLGMRDTLPFLYEIKKRVRQAMIREIETWGYELIETPTLEYYETVGTVSAIDDHQLFKLLDQQGHTLVLRPDMTAPIARLAASRLYKEGNPLRLAYNANVFRAQQREGGRPAEFEQIGVECIGDGTVAADAEVISVMIAALRQAGLQHFTVTIGHIGYVNALFLEIVGNEERASVLRRFLYEKNYVGYREHVKSLPLSSIDQKRLLQLLHLHGNDMTMEEAKELVHSEEGKRAVDDLCELSNALQLYGVDDVVKIDMTLVSHMSYYTGILFEVYAEHVGFPIGNGGRYDELLEKFSRKAPATGFGIRVDRLIEALGESEEEAAIECIVFSQERFAEAIELARTKRREGKRVVLQHISGIRDIDAYSKRYKPITYLLGSTEKE.

Belongs to the class-II aminoacyl-tRNA synthetase family. HisZ subfamily. Heteromultimer composed of HisG and HisZ subunits.

The protein localises to the cytoplasm. It functions in the pathway amino-acid biosynthesis; L-histidine biosynthesis; L-histidine from 5-phospho-alpha-D-ribose 1-diphosphate: step 1/9. Functionally, required for the first step of histidine biosynthesis. May allow the feedback regulation of ATP phosphoribosyltransferase activity by histidine. This is ATP phosphoribosyltransferase regulatory subunit from Geobacillus sp. (strain WCH70).